The primary structure comprises 338 residues: Mitochondrial amidoxime reducing component 2 (338 aa).

A mitochondrion-targeting transit peptide spans 1-35 (MGSSSSTALARLGLPGQPRSTWLGVAALGLAAVAL). Residues K59, K138, and K144 each participate in a glycyl lysine isopeptide (Lys-Gly) (interchain with G-Cter in ubiquitin) cross-link. Position 156 is an N6-acetyllysine; alternate (K156). Residue K156 forms a Glycyl lysine isopeptide (Lys-Gly) (interchain with G-Cter in ubiquitin); alternate linkage. Glycyl lysine isopeptide (Lys-Gly) (interchain with G-Cter in ubiquitin) cross-links involve residues K173, K187, K289, and K296. Positions 188–336 (GRTTKKLYPS…LRVGDPVYRM (149 aa)) constitute an MOSC domain.

Component of a complex composed of cytochrome b5, NADH-cytochrome b5 reductase (CYB5R3) and MTARC2. Mo-molybdopterin serves as cofactor. Ubiquitinated by PRKN during mitophagy, leading to its degradation and enhancement of mitophagy. Deubiquitinated by USP30.

The protein localises to the mitochondrion outer membrane. It is found in the peroxisome. It carries out the reaction N(omega)-hydroxy-L-arginine + 2 Fe(II)-[cytochrome b5] + 2 H(+) = L-arginine + 2 Fe(III)-[cytochrome b5] + H2O. Its function is as follows. Catalyzes the reduction of N-oxygenated molecules, acting as a counterpart of cytochrome P450 and flavin-containing monooxygenases in metabolic cycles. As a component of prodrug-converting system, reduces a multitude of N-hydroxylated prodrugs particularly amidoximes, leading to increased drug bioavailability. May be involved in mitochondrial N(omega)-hydroxy-L-arginine (NOHA) reduction, regulating endogenous nitric oxide levels and biosynthesis. Postulated to cleave the N-OH bond of N-hydroxylated substrates in concert with electron transfer from NADH to cytochrome b5 reductase then to cytochrome b5, the ultimate electron donor that primes the active site for substrate reduction. This Rattus norvegicus (Rat) protein is Mitochondrial amidoxime reducing component 2 (Mtarc2).